The sequence spans 236 residues: Leucyl/phenylalanyl-tRNA--protein transferase (236 aa).

The protein belongs to the L/F-transferase family.

The protein localises to the cytoplasm. The catalysed reaction is N-terminal L-lysyl-[protein] + L-leucyl-tRNA(Leu) = N-terminal L-leucyl-L-lysyl-[protein] + tRNA(Leu) + H(+). It carries out the reaction N-terminal L-arginyl-[protein] + L-leucyl-tRNA(Leu) = N-terminal L-leucyl-L-arginyl-[protein] + tRNA(Leu) + H(+). It catalyses the reaction L-phenylalanyl-tRNA(Phe) + an N-terminal L-alpha-aminoacyl-[protein] = an N-terminal L-phenylalanyl-L-alpha-aminoacyl-[protein] + tRNA(Phe). In terms of biological role, functions in the N-end rule pathway of protein degradation where it conjugates Leu, Phe and, less efficiently, Met from aminoacyl-tRNAs to the N-termini of proteins containing an N-terminal arginine or lysine. The sequence is that of Leucyl/phenylalanyl-tRNA--protein transferase from Nitrosomonas europaea (strain ATCC 19718 / CIP 103999 / KCTC 2705 / NBRC 14298).